A 426-amino-acid chain; its full sequence is Histidine--tRNA ligase (426 aa).

This sequence belongs to the class-II aminoacyl-tRNA synthetase family.

The protein resides in the cytoplasm. It catalyses the reaction tRNA(His) + L-histidine + ATP = L-histidyl-tRNA(His) + AMP + diphosphate + H(+). This is Histidine--tRNA ligase from Saccharolobus islandicus (strain Y.N.15.51 / Yellowstone #2) (Sulfolobus islandicus).